Reading from the N-terminus, the 346-residue chain is DNA-directed RNA polymerase subunit alpha (346 aa).

The segment at 1–242 is alpha N-terminal domain (alpha-NTD); sequence MLIQDGDKLI…DQLSVFINFD (242 aa). An alpha C-terminal domain (alpha-CTD) region spans residues 258–346; the sequence is LNPNLFKSID…WLKRKEKNEA (89 aa).

Belongs to the RNA polymerase alpha chain family. Homodimer. The RNAP catalytic core consists of 2 alpha, 1 beta, 1 beta' and 1 omega subunit. When a sigma factor is associated with the core the holoenzyme is formed, which can initiate transcription.

It catalyses the reaction RNA(n) + a ribonucleoside 5'-triphosphate = RNA(n+1) + diphosphate. In terms of biological role, DNA-dependent RNA polymerase catalyzes the transcription of DNA into RNA using the four ribonucleoside triphosphates as substrates. The protein is DNA-directed RNA polymerase subunit alpha of Maridesulfovibrio salexigens (strain ATCC 14822 / DSM 2638 / NCIMB 8403 / VKM B-1763) (Desulfovibrio salexigens).